The following is a 147-amino-acid chain: HTH-type transcriptional regulator HmrR (147 aa).

The HTH merR-type domain maps to 1–69 (MNIGEASKVS…VEQIKELLAL (69 aa)). The segment at residues 4-23 (GEASKVSGVSSKMIRYYEQI) is a DNA-binding region (H-T-H motif).

As to quaternary structure, homodimer.

The protein resides in the cytoplasm. Regulates the transcription of actP. It detects cytoplasmic copper stress and activates transcription in response to increasing copper concentrations. In the absence of copper, it negatively regulates the transcription of actP. The chain is HTH-type transcriptional regulator HmrR (hmrR) from Sinorhizobium medicae (strain WSM419) (Ensifer medicae).